Consider the following 107-residue polypeptide: Iron-binding protein IscA (107 aa).

C35, C99, and C101 together coordinate Fe cation.

It belongs to the HesB/IscA family. In terms of assembly, homodimer; may form tetramers and higher multimers. Fe cation serves as cofactor.

Functionally, is able to transfer iron-sulfur clusters to apo-ferredoxin. Multiple cycles of [2Fe2S] cluster formation and transfer are observed, suggesting that IscA acts catalytically. Recruits intracellular free iron so as to provide iron for the assembly of transient iron-sulfur cluster in IscU in the presence of IscS, L-cysteine and the thioredoxin reductase system TrxA/TrxB. This chain is Iron-binding protein IscA, found in Salmonella newport (strain SL254).